A 343-amino-acid polypeptide reads, in one-letter code: Geranylgeranyl pyrophosphate synthase 1 (343 aa).

Residues Lys43, Arg46, and His75 each contribute to the isopentenyl diphosphate site. Mg(2+) contacts are provided by Asp82 and Asp86. Arg91 lines the dimethylallyl diphosphate pocket. Arg92 serves as a coordination point for isopentenyl diphosphate. Dimethylallyl diphosphate contacts are provided by Lys169, Thr170, and Gln212. Asp215 is a binding site for Mg(2+). Residues Asn219, Lys229, and Lys239 each coordinate dimethylallyl diphosphate.

Belongs to the FPP/GGPP synthase family. Requires Mg(2+) as cofactor.

It carries out the reaction isopentenyl diphosphate + dimethylallyl diphosphate = (2E)-geranyl diphosphate + diphosphate. The catalysed reaction is isopentenyl diphosphate + (2E)-geranyl diphosphate = (2E,6E)-farnesyl diphosphate + diphosphate. It catalyses the reaction isopentenyl diphosphate + (2E,6E)-farnesyl diphosphate = (2E,6E,10E)-geranylgeranyl diphosphate + diphosphate. Functionally, geranylgeranyl pyrophosphate synthase; part of the gene cluster 4 that mediates the biosynthesis of an isoprenoid secondary metabolite. The chain is Geranylgeranyl pyrophosphate synthase 1 (GGS1) from Zymoseptoria tritici (strain CBS 115943 / IPO323) (Speckled leaf blotch fungus).